A 117-amino-acid chain; its full sequence is Glycoprotein hormones alpha chain (117 aa).

An N-terminal signal peptide occupies residues 1-23 (MGSVKSAGLSLLLLSFLLYVADS). 5 cysteine pairs are disulfide-bonded: cysteine 34–cysteine 57, cysteine 37–cysteine 86, cysteine 54–cysteine 107, cysteine 58–cysteine 109, and cysteine 85–cysteine 112. Asparagine 78 and asparagine 103 each carry an N-linked (GlcNAc...) asparagine glycan.

The protein belongs to the glycoprotein hormones subunit alpha family. As to quaternary structure, heterodimer. Glycoprotein hormones are heterodimers composed of a common alpha chain described here and a unique beta chain which confers their biological specificity to the different hormones.

The protein localises to the secreted. Shared alpha chain of heterodimeric glycoprotein hormones. These hormones bind specific receptors on target cells that in turn activate downstream signaling pathways. Involved in gametogenesis and steroidogenesis. The protein is Glycoprotein hormones alpha chain (cga) of Acanthopagrus latus (Yellowfin seabream).